The sequence spans 193 residues: Ganglioside GM2 activator (193 aa).

The signal sequence occupies residues 1-20 (MHRLPLLLLLGLLLAGSVAP). 4 cysteine pairs are disulfide-bonded: Cys-39/Cys-183, Cys-99/Cys-106, Cys-112/Cys-138, and Cys-125/Cys-136. Asn-151 carries N-linked (GlcNAc...) asparagine glycosylation.

As to expression, widely expressed. Most abundant in kidney and testis.

The protein resides in the lysosome. The catalysed reaction is cholesterol(in) = cholesterol(out). Its function is as follows. Binds gangliosides and stimulates ganglioside GM2 degradation. It stimulates only the breakdown of ganglioside GM2 and glycolipid GA2 by beta-hexosaminidase A. It extracts single GM2 molecules from membranes and presents them in soluble form to beta-hexosaminidase A for cleavage of N-acetyl-D-galactosamine and conversion to GM3. The large binding pocket can accommodate several single chain phospholipids and fatty acids, GM2A also exhibits some calcium-independent phospholipase activity. Has cholesterol transfer activity. This Mus musculus (Mouse) protein is Ganglioside GM2 activator.